The sequence spans 232 residues: Ribose-5-phosphate isomerase A (232 aa).

Residues 28-31 (TGST), 83-86 (DGAD), and 96-99 (KGGG) each bind substrate. The active-site Proton acceptor is the E105. Substrate is bound at residue K123.

This sequence belongs to the ribose 5-phosphate isomerase family. Homodimer.

The enzyme catalyses aldehydo-D-ribose 5-phosphate = D-ribulose 5-phosphate. Its pathway is carbohydrate degradation; pentose phosphate pathway; D-ribose 5-phosphate from D-ribulose 5-phosphate (non-oxidative stage): step 1/1. Functionally, catalyzes the reversible conversion of ribose-5-phosphate to ribulose 5-phosphate. This Rhodopseudomonas palustris (strain BisB18) protein is Ribose-5-phosphate isomerase A.